Reading from the N-terminus, the 26-residue chain is Halocyntin (26 aa).

Its function is as follows. Has strong antibacterial activity against the Gram-positive bacteria M.luteus, S.aureus, B.megaterium, A.viridans and E.faecalis, and against the Gram-negative bacterium K.pneumoniae. Has less potent antibacterial activity against the Gram-negative bacteria E.coli DH5alpha, S.typhimurium, P.aeruginosa, E.aerogenes and N.gonorrhoeae. Has moderate hemolytic activity against sheep erythrocytes. This Halocynthia papillosa (Red sea-squirt) protein is Halocyntin.